Consider the following 364-residue polypeptide: Phosphoserine aminotransferase (364 aa).

Residue Arg40 coordinates L-glutamate. Pyridoxal 5'-phosphate-binding positions include 74-75, Trp100, Thr149, Asp170, and Gln193; that span reads GT. N6-(pyridoxal phosphate)lysine is present on Lys194. 235 to 236 is a pyridoxal 5'-phosphate binding site; the sequence is NT.

Belongs to the class-V pyridoxal-phosphate-dependent aminotransferase family. SerC subfamily. In terms of assembly, homodimer. Pyridoxal 5'-phosphate is required as a cofactor. In terms of tissue distribution, expressed in ovary and head.

It catalyses the reaction O-phospho-L-serine + 2-oxoglutarate = 3-phosphooxypyruvate + L-glutamate. It carries out the reaction 4-(phosphooxy)-L-threonine + 2-oxoglutarate = (R)-3-hydroxy-2-oxo-4-phosphooxybutanoate + L-glutamate. It participates in amino-acid biosynthesis; L-serine biosynthesis; L-serine from 3-phospho-D-glycerate: step 2/3. Its pathway is cofactor biosynthesis; pyridoxine 5'-phosphate biosynthesis; pyridoxine 5'-phosphate from D-erythrose 4-phosphate: step 3/5. Functionally, catalyzes the reversible conversion of 3-phosphohydroxypyruvate to phosphoserine and of 3-hydroxy-2-oxo-4-phosphonooxybutanoate to phosphohydroxythreonine. This is Phosphoserine aminotransferase from Drosophila melanogaster (Fruit fly).